Consider the following 319-residue polypeptide: Annexin A4 (319 aa).

A2 is subject to N-acetylalanine. Phosphothreonine is present on T7. S12 bears the Phosphoserine mark. Annexin repeat units follow at residues 14–85 (FNAA…GMMT), 86–157 (PTVL…SLSA), 169–241 (ALMR…AIVK), and 245–316 (NKSA…ILCG). An N6-acetyllysine mark is found at K213, K293, and K300.

Belongs to the annexin family. Monomer. Binds to SFTPA1 in a Ca(2+)-dependent manner.

It is found in the zymogen granule membrane. May play a role in alveolar type II cells through interaction with the surfactant protein SFTPA1 (SP-A). This Bos taurus (Bovine) protein is Annexin A4 (ANXA4).